Reading from the N-terminus, the 1433-residue chain is DNA polymerase III PolC-type (1433 aa).

The region spanning 419-575 is the Exonuclease domain; the sequence is FVVFDVETTG…YDAEATGHLL (157 aa).

Belongs to the DNA polymerase type-C family. PolC subfamily.

It is found in the cytoplasm. The catalysed reaction is DNA(n) + a 2'-deoxyribonucleoside 5'-triphosphate = DNA(n+1) + diphosphate. Functionally, required for replicative DNA synthesis. This DNA polymerase also exhibits 3' to 5' exonuclease activity. The sequence is that of DNA polymerase III PolC-type from Halalkalibacterium halodurans (strain ATCC BAA-125 / DSM 18197 / FERM 7344 / JCM 9153 / C-125) (Bacillus halodurans).